A 351-amino-acid polypeptide reads, in one-letter code: Autoinducer 2 import system permease protein LsrC (351 aa).

9 helical membrane-spanning segments follow: residues 14–34 (LLAI…YFSL), 39–59 (MIFS…LVML), 70–90 (ITGL…GLVA), 93–113 (LFAL…VTWL), 115–135 (IPAI…MLLL), 155–175 (ILFS…AMAW), 213–233 (MNGV…GFIP), 252–272 (GISL…AFLL), and 284–304 (LPAW…LVFD).

This sequence belongs to the binding-protein-dependent transport system permease family. AraH/RbsC subfamily. The complex is composed of two ATP-binding proteins (LsrA), two transmembrane proteins (LsrC and LsrD) and a solute-binding protein (LsrB).

It is found in the cell inner membrane. Functionally, part of the ABC transporter complex LsrABCD involved in autoinducer 2 (AI-2) import. Probably responsible for the translocation of the substrate across the membrane. This Yersinia pseudotuberculosis serotype O:3 (strain YPIII) protein is Autoinducer 2 import system permease protein LsrC (lsrC).